Consider the following 158-residue polypeptide: Protein GLUTAMINE DUMPER 1 (158 aa).

At 1-36 the chain is on the extracellular side; it reads MRPLSVQSKFEDVATSTSVNHHGVTPQSPWHSPVPY. Residues 37–57 traverse the membrane as a helical segment; sequence LFGGLAAMLGLIAFALLILAC. Residues 58–158 lie on the Cytoplasmic side of the membrane; sequence SYWRLSSSGE…DTGETTTTSH (101 aa). The tract at residues 65–85 is disordered; that stretch reads SGEEDGQNVDEEKESRSGDKA. A compositionally biased stretch (acidic residues) spans 66 to 76; the sequence is GEEDGQNVDEE. A VIMAG motif is present at residues 96-100; it reads VIMAG. The interval 126–158 is disordered; sequence ISQEESVAKEEEKMREGEEEKVKDTGETTTTSH. The segment covering 131-151 has biased composition (basic and acidic residues); it reads SVAKEEEKMREGEEEKVKDTG.

Belongs to the GLUTAMINE DUMPER 1 (TC 9.B.60) family. In terms of assembly, interacts with LOG2. Post-translationally, ubiquitinated by LOG2 (in vitro). Expressed in the vascular tissues and in hydathodes. Expressed in the phloem and xylem (at the protein level).

The protein resides in the cell membrane. Probable subunit of an amino acid transporter involved in the regulation of the amino acid metabolism. Stimulates amino acid export by activating nonselective amino acid facilitators. Required the interaction with the RING-type E3 ubiquitin-protein ligase LOG2 to fulfill its function. Plays a role in the Gln export at hydathodes, at xylem parenchyma into xylem sap and from mesophyll into leaf apoplasm. Acts upstream genes involved in the salicylic acid (SA) pathway and in the geminivirus-host interaction. In Arabidopsis thaliana (Mouse-ear cress), this protein is Protein GLUTAMINE DUMPER 1 (GDU1).